We begin with the raw amino-acid sequence, 193 residues long: Coiled-coil domain-containing protein 184 (193 aa).

Residues 39–68 (GMKELMEHLKAQLQALFEDVRAMRGALDEQ) adopt a coiled-coil conformation. A disordered region spans residues 101–176 (GLGVAGGKGS…LGENGPLVEP (76 aa)). Acidic residues predominate over residues 135-146 (PDEEDEEEEEEK).

In Rattus norvegicus (Rat), this protein is Coiled-coil domain-containing protein 184 (Ccdc184).